We begin with the raw amino-acid sequence, 1078 residues long: Rho family-interacting cell polarization regulator 2 (1078 aa).

Phosphoserine occurs at positions 46 and 62. The involved in cell filopodia formation stretch occupies residues 80–138 (MHNLGHKNNNTPKEPQPKRVEEVYRALKNGLDEYLEFHQTELDKLTAQLKDMKRNSRLG). Residues 108–137 (NGLDEYLEFHQTELDKLTAQLKDMKRNSRL) adopt a coiled-coil conformation. S366 carries the post-translational modification Phosphoserine. Polar residues predominate over residues 488–508 (SSLSSQNEGTEDSSSASSRNS). Positions 488–534 (SSLSSQNEGTEDSSSASSRNSLGEDHEPKSHPKSDTVEPGKPGVATR) are disordered. A compositionally biased stretch (basic and acidic residues) spans 509–525 (LGEDHEPKSHPKSDTVE). A Phosphoserine modification is found at S582.

This sequence belongs to the RIPOR family. As to quaternary structure, homooligomer; homooligomerization is regulated by RHOC and leads to the formation of concatemers through the association of N- and C-termini. Interacts (phosphorylated form) with 14-3-3 proteins; these interactions occur during myogenic cell differentiation and also induces T cell proliferation arrest. Interacts (phosphorylated form) with HDAC6; this interaction occurs during early myogenic differentiation, prevents HDAC6 to deacetylate tubulin and also induces T cell proliferation arrest. Interacts with DYSF; this interaction occurs during early myogenic differentiation. Interacts with MYOF. Interacts (via active GTP- or inactive GDP-bound forms) with RHOA; this interaction is direct, blocks the loading of GTP to RHOA and decreases upon chemokine CCL19 stimulation in primary T lymphocytes. Interacts with RHOC. Interacts (via phosphorylated form) with YWHAB; this interaction occurs in a chemokine-dependent manner and does not compete for binding of RIPOR2 with RHOA nor blocks inhibition of RIPOR2-mediated RHOA activity. Interacts with YWHAE. Interacts with YWHAQ. Phosphorylated. Chemokine-induced phosphorylation in neutrophils occurs in a PKC- and AKT-dependent manner, resulting in RIPOR2 interaction with YWHAB and stabilization. Phosphorylated by PKCA, AKT1 and MAPKAPK1A; in vitro. In terms of tissue distribution, expressed in the cochlea. Expressed in inner hair cells and outer hair cells and Hensen's cells (at protein level). Expressed in the brain, cerebellum, spinal cord, retina, heart, spleen liver, kidney, bladder, muscle and lung. Expressed in the cochlea of the inner ear.

It localises to the cytoplasm. The protein resides in the cytoskeleton. Its subcellular location is the cell projection. The protein localises to the filopodium. It is found in the stereocilium. It localises to the stereocilium membrane. The protein resides in the apical cell membrane. In terms of biological role, acts as an inhibitor of the small GTPase RHOA and plays several roles in the regulation of myoblast and hair cell differentiation, lymphocyte T proliferation and neutrophil polarization. Plays a role in fetal mononuclear myoblast differentiation by promoting filopodia and myotube formation. Maintains naive T lymphocytes in a quiescent state and prevents chemokine-induced T lymphocyte responses, such as cell adhesion, polarization and migration. Involved also in the regulation of neutrophil polarization, chemotaxis and adhesion. Required for normal development of inner and outer hair cell stereocilia within the cochlea of the inner ear. Plays a role for maintaining the structural organization of the basal domain of stereocilia. Involved in mechanosensory hair cell function. Required for normal hearing. This chain is Rho family-interacting cell polarization regulator 2, found in Mus musculus (Mouse).